Here is a 152-residue protein sequence, read N- to C-terminus: SsrA-binding protein (152 aa).

Residues 122-152 (KGKKNHDKRETEAARDWQRDKARLMKGDRGD) are disordered. The segment covering 128 to 152 (DKRETEAARDWQRDKARLMKGDRGD) has biased composition (basic and acidic residues).

Belongs to the SmpB family.

It localises to the cytoplasm. Its function is as follows. Required for rescue of stalled ribosomes mediated by trans-translation. Binds to transfer-messenger RNA (tmRNA), required for stable association of tmRNA with ribosomes. tmRNA and SmpB together mimic tRNA shape, replacing the anticodon stem-loop with SmpB. tmRNA is encoded by the ssrA gene; the 2 termini fold to resemble tRNA(Ala) and it encodes a 'tag peptide', a short internal open reading frame. During trans-translation Ala-aminoacylated tmRNA acts like a tRNA, entering the A-site of stalled ribosomes, displacing the stalled mRNA. The ribosome then switches to translate the ORF on the tmRNA; the nascent peptide is terminated with the 'tag peptide' encoded by the tmRNA and targeted for degradation. The ribosome is freed to recommence translation, which seems to be the essential function of trans-translation. This chain is SsrA-binding protein, found in Caulobacter sp. (strain K31).